Consider the following 780-residue polypeptide: Subtilisin-like protease SBT5.1 (780 aa).

The first 25 residues, 1 to 25 (MMRCLTITIMFFMFFFLSVIQKCKS), serve as a signal peptide directing secretion. Residues 26 to 106 (ETSKSGDYII…VFPDQMLQLH (81 aa)) constitute a propeptide, activation peptide. The Inhibitor I9 domain occupies 33-106 (YIIYMGAASS…VFPDQMLQLH (74 aa)). The region spanning 110-617 (SWDFLVQESY…AGQVTIFGPS (508 aa)) is the Peptidase S8 domain. D147 acts as the Charge relay system in catalysis. N197 carries an N-linked (GlcNAc...) asparagine glycan. Residue H215 is the Charge relay system of the active site. N-linked (GlcNAc...) asparagine glycosylation occurs at N230. A PA domain is found at 385-469 (IDANEEAARN…PEDGIQIMSY (85 aa)). An N-linked (GlcNAc...) asparagine glycan is attached at N471. The Charge relay system role is filled by S550. Residue N776 is glycosylated (N-linked (GlcNAc...) asparagine).

The protein belongs to the peptidase S8 family.

The protein localises to the secreted. This is Subtilisin-like protease SBT5.1 from Arabidopsis thaliana (Mouse-ear cress).